The sequence spans 307 residues: Low-salt glycan biosynthesis hexosyltransferase Agl10 (307 aa).

Belongs to the glycosyltransferase 2 family.

Its pathway is protein modification; protein glycosylation. It functions in the pathway cell surface structure biogenesis; S-layer biogenesis. Hexosyltransferase involved in N-glycan biosynthetic pathway that takes place under low-salt conditions (1.75 M instead of 3.4 M). Participates in the formation of the tetrasaccharide present at 'Asn-532' of S-layer glycoprotein Csg, consisting of a sulfated hexose, 2 hexoses and rhamnose. Involved in the addition of final rhamnose (sugar 4) of the tetrasaccharide on the dolichol phosphate carrier. The polypeptide is Low-salt glycan biosynthesis hexosyltransferase Agl10 (agl10) (Haloferax volcanii (strain ATCC 29605 / DSM 3757 / JCM 8879 / NBRC 14742 / NCIMB 2012 / VKM B-1768 / DS2) (Halobacterium volcanii)).